The chain runs to 95 residues: Small ribosomal subunit protein bS21 (95 aa).

The interval 56 to 95 (KLARKKMQREGLLPMKPKPVFGAGPGAGRGGPAAGPRGPR) is disordered. Positions 78–88 (AGPGAGRGGPA) are enriched in gly residues.

It belongs to the bacterial ribosomal protein bS21 family.

This Nitrobacter winogradskyi (strain ATCC 25391 / DSM 10237 / CIP 104748 / NCIMB 11846 / Nb-255) protein is Small ribosomal subunit protein bS21.